Consider the following 299-residue polypeptide: MSAKPSVGFVNEASRQILAGGSAGLVEICLMHPLDVVKTRFQIQRCTTDPNSYKSLGDSFRMIFRTEGLFGFYKGILPPILAETPKRAVKFFTFEQYKKLLGYVSLSPALTFAVAGLGSGLTEAIVVNPFEVVKVGLQANRNRFTEQPSTMSYARHIIKKEGLGLGGLNKGFTATLGRHGVFNMVYFGFYFNVKNIIPVNKDPTLEFLRKFGIGLLSGTIASVINIPFDVAKSRIQGPQPVPGEIKYKTCFKTMATVYQEEGILALYKGLLPKIMRLGPGGAVMLLVYEYTYSWLQENW.

Solcar repeat units follow at residues 11-100 (NEAS…YKKL), 107-196 (SPAL…VKNI), and 205-294 (LEFL…TYSW). The next 6 membrane-spanning stretches (helical) occupy residues 17–37 (ILAG…LDVV), 62–82 (MIFR…PILA), 100–120 (LLGY…LGSG), 179–199 (HGVF…IIPV), 211–231 (FGIG…FDVA), and 274–290 (IMRL…VYEY).

This sequence belongs to the mitochondrial carrier (TC 2.A.29) family.

It is found in the mitochondrion inner membrane. It catalyses the reaction 2-oxoadipate(in) + 2-oxoglutarate(out) = 2-oxoadipate(out) + 2-oxoglutarate(in). The enzyme catalyses hexanedioate(in) + 2-oxoglutarate(out) = hexanedioate(out) + 2-oxoglutarate(in). It carries out the reaction L-2-aminoadipate(in) + 2-oxoglutarate(out) = L-2-aminoadipate(out) + 2-oxoglutarate(in). The catalysed reaction is glutarate(in) + 2-oxoglutarate(out) = glutarate(out) + 2-oxoglutarate(in). It catalyses the reaction 2-oxoheptanedioate(in) + 2-oxoglutarate(out) = 2-oxoheptanedioate(out) + 2-oxoglutarate(in). The enzyme catalyses heptanedioate(in) + 2-oxoglutarate(out) = heptanedioate(out) + 2-oxoglutarate(in). It carries out the reaction citrate(in) + 2-oxoglutarate(out) = citrate(out) + 2-oxoglutarate(in). Functionally, transports dicarboxylates across the inner membranes of mitochondria by a counter-exchange mechanism. Can transport 2-oxoadipate (2-oxohexanedioate), 2-oxoglutarate, adipate (hexanedioate), glutarate, and to a lesser extent, pimelate (heptanedioate), 2-oxopimelate (2-oxoheptanedioate), 2-aminoadipate (2-aminohexanedioate), oxaloacetate, and citrate. Plays a central role in catabolism of lysine, hydroxylysine, and tryptophan, by transporting common metabolite intermediates (such as 2-oxoadipate) into the mitochondria, where it is converted into acetyl-CoA and can enter the citric acid (TCA) cycle. The sequence is that of Mitochondrial 2-oxodicarboxylate carrier (SLC25A21) from Bos taurus (Bovine).